Consider the following 500-residue polypeptide: Glucose-1-phosphate adenylyltransferase small subunit 1, chloroplastic/amyloplastic (500 aa).

The transit peptide at M1 to R50 directs the protein to the chloroplast.

It belongs to the bacterial/plant glucose-1-phosphate adenylyltransferase family. Heterotetramer composed of two small and two large subunits. Expressed in leaves.

The protein resides in the plastid. It localises to the chloroplast. The protein localises to the amyloplast. It carries out the reaction alpha-D-glucose 1-phosphate + ATP + H(+) = ADP-alpha-D-glucose + diphosphate. It participates in glycan biosynthesis; starch biosynthesis. With respect to regulation, activated by 3'phosphoglycerate, inhibited by orthophosphate. Allosteric regulation. Functionally, involved in synthesis of starch. Catalyzes the synthesis of ADP-glucose, a molecule that serves as an activated glycosyl donor for alpha-1,4-glucan synthesis. Essential for starch synthesis in leaf chloroplasts and endosperm amyloplasts. This Oryza sativa subsp. japonica (Rice) protein is Glucose-1-phosphate adenylyltransferase small subunit 1, chloroplastic/amyloplastic.